The primary structure comprises 158 residues: Transcription elongation factor GreA (158 aa).

The stretch at 1–26 forms a coiled coil; it reads MNKVPLTEKGAQQLREELQELKTVVR.

This sequence belongs to the GreA/GreB family.

Functionally, necessary for efficient RNA polymerase transcription elongation past template-encoded arresting sites. The arresting sites in DNA have the property of trapping a certain fraction of elongating RNA polymerases that pass through, resulting in locked ternary complexes. Cleavage of the nascent transcript by cleavage factors such as GreA or GreB allows the resumption of elongation from the new 3'terminus. GreA releases sequences of 2 to 3 nucleotides. This chain is Transcription elongation factor GreA, found in Nitrosococcus oceani (strain ATCC 19707 / BCRC 17464 / JCM 30415 / NCIMB 11848 / C-107).